The chain runs to 362 residues: Phospho-N-acetylmuramoyl-pentapeptide-transferase (362 aa).

10 helical membrane-spanning segments follow: residues 28 to 48 (GAVL…IAWL), 75 to 95 (TMGG…WADL), 100 to 120 (VWIV…DDYL), 134 to 154 (AKLV…WSLQ), 170 to 190 (VLLQ…VGAG), 201 to 221 (GLAI…SYLV), 241 to 261 (LAVF…FNAP), 265 to 285 (VFMG…ISVV), 290 to 310 (LVLG…IVQV), and 339 to 359 (TVVI…LATL).

Belongs to the glycosyltransferase 4 family. MraY subfamily. Mg(2+) is required as a cofactor.

The protein resides in the cell inner membrane. It catalyses the reaction UDP-N-acetyl-alpha-D-muramoyl-L-alanyl-gamma-D-glutamyl-meso-2,6-diaminopimeloyl-D-alanyl-D-alanine + di-trans,octa-cis-undecaprenyl phosphate = di-trans,octa-cis-undecaprenyl diphospho-N-acetyl-alpha-D-muramoyl-L-alanyl-D-glutamyl-meso-2,6-diaminopimeloyl-D-alanyl-D-alanine + UMP. It participates in cell wall biogenesis; peptidoglycan biosynthesis. Catalyzes the initial step of the lipid cycle reactions in the biosynthesis of the cell wall peptidoglycan: transfers peptidoglycan precursor phospho-MurNAc-pentapeptide from UDP-MurNAc-pentapeptide onto the lipid carrier undecaprenyl phosphate, yielding undecaprenyl-pyrophosphoryl-MurNAc-pentapeptide, known as lipid I. In Paramagnetospirillum magneticum (strain ATCC 700264 / AMB-1) (Magnetospirillum magneticum), this protein is Phospho-N-acetylmuramoyl-pentapeptide-transferase.